Here is a 226-residue protein sequence, read N- to C-terminus: Ribose-5-phosphate isomerase A (226 aa).

Substrate is bound by residues 28–31 (TGST), 83–86 (DGAD), and 97–100 (KGGG). Glutamate 106 (proton acceptor) is an active-site residue. A substrate-binding site is contributed by lysine 124.

This sequence belongs to the ribose 5-phosphate isomerase family. As to quaternary structure, homotetramer.

It carries out the reaction aldehydo-D-ribose 5-phosphate = D-ribulose 5-phosphate. The protein operates within carbohydrate biosynthesis; D-ribose 5-phosphate biosynthesis. In terms of biological role, catalyzes the reversible conversion of ribose-5-phosphate to ribulose 5-phosphate. This Methanocaldococcus jannaschii (strain ATCC 43067 / DSM 2661 / JAL-1 / JCM 10045 / NBRC 100440) (Methanococcus jannaschii) protein is Ribose-5-phosphate isomerase A.